The sequence spans 289 residues: Ribosomal protein L11 methyltransferase (289 aa).

Positions 135, 156, 179, and 225 each coordinate S-adenosyl-L-methionine.

This sequence belongs to the methyltransferase superfamily. PrmA family.

The protein resides in the cytoplasm. It carries out the reaction L-lysyl-[protein] + 3 S-adenosyl-L-methionine = N(6),N(6),N(6)-trimethyl-L-lysyl-[protein] + 3 S-adenosyl-L-homocysteine + 3 H(+). Methylates ribosomal protein L11. The polypeptide is Ribosomal protein L11 methyltransferase (Chlorobaculum tepidum (strain ATCC 49652 / DSM 12025 / NBRC 103806 / TLS) (Chlorobium tepidum)).